Here is a 240-residue protein sequence, read N- to C-terminus: tRNA pseudouridine synthase B (240 aa).

Catalysis depends on aspartate 54, which acts as the Nucleophile.

The protein belongs to the pseudouridine synthase TruB family. Type 1 subfamily.

It carries out the reaction uridine(55) in tRNA = pseudouridine(55) in tRNA. Responsible for synthesis of pseudouridine from uracil-55 in the psi GC loop of transfer RNAs. The sequence is that of tRNA pseudouridine synthase B from Chlorobium phaeovibrioides (strain DSM 265 / 1930) (Prosthecochloris vibrioformis (strain DSM 265)).